A 478-amino-acid polypeptide reads, in one-letter code: Zinc finger C3HC-type protein 1-like (478 aa).

The C3HC-type zinc finger occupies 93 to 147; sequence CAKYGWSNIECDMLKCSSCNAYLCASLQPVLDFSKYKQRCVELQEALRKAHEKFC. Residues 285–389 form a disordered region; the sequence is LSAPNTPVSP…SSSSDTSPRG (105 aa). The segment covering 351–363 has biased composition (polar residues); it reads SMGQGESSGLSNE. A compositionally biased stretch (low complexity) spans 377-388; that stretch reads LCSSSSSDTSPR.

In terms of processing, phosphorylated. May also be weakly phosphorylated on Tyr residues.

The protein resides in the nucleus. The protein localises to the nucleus envelope. Its function is as follows. Required for proper positioning of a substantial amount of TPR at the nuclear basket (NB) through interaction with TPR. The protein is Zinc finger C3HC-type protein 1-like (zc3hc1) of Xenopus tropicalis (Western clawed frog).